Consider the following 201-residue polypeptide: MAEKPYKCDKCGKGFTRSSSLLVHHSVHTGEKPFKCDRCGKGFSQSSKLHIHKRVHTGEKPYACEECGMSFSQRSNLHIHQRVHTGERPYKCGECGKGFSQSSNLHIHRCTHTGEKPYQCYECGKGFSQSSDLRIHLRVHTGEKPYHCGKCGQGFSQSSKLLIHQRVHTGEKPYECSKCGKGFSQSSNLHIHQRVHRKELH.

7 consecutive C2H2-type zinc fingers follow at residues 6–28 (YKCD…HSVH), 34–56 (FKCD…KRVH), 62–84 (YACE…QRVH), 90–112 (YKCG…RCTH), 118–140 (YQCY…LRVH), 146–168 (YHCG…QRVH), and 174–196 (YECS…QRVH).

Belongs to the krueppel C2H2-type zinc-finger protein family. Preferentially expressed in transformed mouse cells.

It localises to the nucleus. In terms of biological role, may be involved in transcriptional regulation. The polypeptide is Zinc finger protein 239 (Znf239) (Mus musculus (Mouse)).